A 385-amino-acid polypeptide reads, in one-letter code: Bifunctional chorismate mutase/prephenate dehydratase (385 aa).

Residues 1–92 (MPANNSLLIF…ESVATQKKLL (92 aa)) form the Chorismate mutase domain. Residues Arg11, Arg28, Lys39, Asp48, Glu52, Ser84, and Gln88 each contribute to the substrate site. The Prephenate dehydratase domain occupies 105–285 (NFSFLGPKGS…NITRFILLNR (181 aa)). The interval 286–385 (NPKKISKNIP…PSEKITPIAP (100 aa)) is regulatory. The region spanning 299 to 376 (TLIFTTGQEA…RFIKILGCYP (78 aa)) is the ACT domain.

It is found in the cytoplasm. The enzyme catalyses chorismate = prephenate. It carries out the reaction prephenate + H(+) = 3-phenylpyruvate + CO2 + H2O. It functions in the pathway amino-acid biosynthesis; L-phenylalanine biosynthesis; phenylpyruvate from prephenate: step 1/1. The protein operates within metabolic intermediate biosynthesis; prephenate biosynthesis; prephenate from chorismate: step 1/1. Its function is as follows. Catalyzes the Claisen rearrangement of chorismate to prephenate and the decarboxylation/dehydration of prephenate to phenylpyruvate. This chain is Bifunctional chorismate mutase/prephenate dehydratase (pheA), found in Buchnera aphidicola subsp. Acyrthosiphon pisum (strain APS) (Acyrthosiphon pisum symbiotic bacterium).